A 294-amino-acid polypeptide reads, in one-letter code: ATP synthase gamma chain (294 aa).

The protein belongs to the ATPase gamma chain family. As to quaternary structure, F-type ATPases have 2 components, CF(1) - the catalytic core - and CF(0) - the membrane proton channel. CF(1) has five subunits: alpha(3), beta(3), gamma(1), delta(1), epsilon(1). CF(0) has three main subunits: a, b and c.

Its subcellular location is the cell inner membrane. Produces ATP from ADP in the presence of a proton gradient across the membrane. The gamma chain is believed to be important in regulating ATPase activity and the flow of protons through the CF(0) complex. The protein is ATP synthase gamma chain of Rhizobium johnstonii (strain DSM 114642 / LMG 32736 / 3841) (Rhizobium leguminosarum bv. viciae).